A 393-amino-acid chain; its full sequence is Cytochrome b (393 aa).

Topologically, residues 1-33 are mitochondrial matrix; it reads MTIRNQRFSLLKQPISSTLNQHLVDYPTPSNLS. The chain crosses the membrane as a helical span at residues 34–57; sequence YWWGFGSLAGICLVIQIVTGVFLA. At 58–80 the chain is on the mitochondrial intermembrane side; that stretch reads MHYTPHVDLAFNSVEHIMRDVEG. The helical transmembrane segment at 81–108 threads the bilayer; the sequence is GWLLRYMHANGASMFFIVVYLHIFRGLY. His-88 and His-102 together coordinate heme b. The Mitochondrial matrix portion of the chain corresponds to 109–116; it reads YASYSSPR. The helical transmembrane segment at 117–141 threads the bilayer; that stretch reads EFVWCLGVVIFLLMIVTAFIGYVLP. Residues 142-178 are Mitochondrial intermembrane-facing; the sequence is WGQMSFWGATVITSLASAIPVVGDTIVTWLWGGFSVD. The helical transmembrane segment at 179–210 threads the bilayer; it reads NATLNRFFSLHYLLPFILVGASLLHLAALHQY. The heme b site is built by His-189 and His-203. His-208 contributes to the a ubiquinone binding site. At 211 to 229 the chain is on the mitochondrial matrix side; that stretch reads GSNNPLGVHSEMDKIAFYP. Residues 230–252 traverse the membrane as a helical segment; it reads YFYVKDLVGWVAFAIFFSIWIFY. Residues 253–293 lie on the Mitochondrial intermembrane side of the membrane; it reads APNVLGHPDNYIPANPMSTPPHIVPEWYFLPIYAILRSIPD. The helical transmembrane segment at 294 to 314 threads the bilayer; the sequence is KAGGVAAIALVFICLLALPFF. Topologically, residues 315–325 are mitochondrial matrix; sequence KSMYVRSSSFR. The helical transmembrane segment at 326-346 threads the bilayer; it reads PIYQGMFWLLLADCLLLGWIG. Topologically, residues 347 to 353 are mitochondrial intermembrane; the sequence is CQPVEAP. Residues 354–370 form a helical membrane-spanning segment; sequence FVTIGQISSLVFFLFFA. The Mitochondrial matrix segment spans residues 371–393; sequence ITPILGRVGRGIPNSYTDETDHT.

This sequence belongs to the cytochrome b family. In terms of assembly, component of the ubiquinol-cytochrome c oxidoreductase (cytochrome b-c1 complex, complex III, CIII), a multisubunit enzyme composed of 10 subunits. The complex is composed of 3 respiratory subunits cytochrome b (MT-CYB), cytochrome c1 (CYC1-1 or CYC1-2) and Rieske protein (UCR1-1 or UCR1-2), 2 core protein subunits MPPalpha1 (or MPPalpha2) and MPPB, and 5 low-molecular weight protein subunits QCR7-1 (or QCR7-2), UCRQ-1 (or UCRQ-2), QCR9, UCRY and probably QCR6-1 (or QCR6-2). The complex exists as an obligatory dimer and forms supercomplexes (SCs) in the inner mitochondrial membrane with NADH-ubiquinone oxidoreductase (complex I, CI), resulting in different assemblies (supercomplexes SCI(1)III(2) and SCI(2)III(4)). The cofactor is heme b.

It localises to the mitochondrion inner membrane. Component of the ubiquinol-cytochrome c oxidoreductase, a multisubunit transmembrane complex that is part of the mitochondrial electron transport chain which drives oxidative phosphorylation. The respiratory chain contains 3 multisubunit complexes succinate dehydrogenase (complex II, CII), ubiquinol-cytochrome c oxidoreductase (cytochrome b-c1 complex, complex III, CIII) and cytochrome c oxidase (complex IV, CIV), that cooperate to transfer electrons derived from NADH and succinate to molecular oxygen, creating an electrochemical gradient over the inner membrane that drives transmembrane transport and the ATP synthase. The cytochrome b-c1 complex catalyzes electron transfer from ubiquinol to cytochrome c, linking this redox reaction to translocation of protons across the mitochondrial inner membrane, with protons being carried across the membrane as hydrogens on the quinol. In the process called Q cycle, 2 protons are consumed from the matrix, 4 protons are released into the intermembrane space and 2 electrons are passed to cytochrome c. Cytochrome b is a catalytic core subunit containing 2 b-type hemes BL and BH topographically segregated in the quinone reduction (Qi) and quinol oxidation (Q0) sites on opposite sides of the membrane. This is Cytochrome b (MT-CYB) from Arabidopsis thaliana (Mouse-ear cress).